An 877-amino-acid chain; its full sequence is Alanine--tRNA ligase (877 aa).

Zn(2+) is bound by residues H561, H565, C669, and H673.

The protein belongs to the class-II aminoacyl-tRNA synthetase family. The cofactor is Zn(2+).

It is found in the cytoplasm. The catalysed reaction is tRNA(Ala) + L-alanine + ATP = L-alanyl-tRNA(Ala) + AMP + diphosphate. Its function is as follows. Catalyzes the attachment of alanine to tRNA(Ala) in a two-step reaction: alanine is first activated by ATP to form Ala-AMP and then transferred to the acceptor end of tRNA(Ala). Also edits incorrectly charged Ser-tRNA(Ala) and Gly-tRNA(Ala) via its editing domain. In Endomicrobium trichonymphae, this protein is Alanine--tRNA ligase.